A 145-amino-acid polypeptide reads, in one-letter code: Large ribosomal subunit protein uL15 (145 aa).

A disordered region spans residues 20-39 (GRVGKHRKHPSGRGNAGGEH).

The protein belongs to the universal ribosomal protein uL15 family.

This Trypanosoma brucei brucei protein is Large ribosomal subunit protein uL15 (RPL27A).